The sequence spans 653 residues: Rab proteins geranylgeranyltransferase component A 1 (653 aa).

A disordered region spans residues proline 606 to glutamate 653. The span at proline 623–glycine 646 shows a compositional bias: polar residues.

This sequence belongs to the Rab GDI family. As to quaternary structure, monomer. Heterotrimer composed of RABGGTA, RABGGTB and CHM; within this trimer, RABGGTA and RABGGTB form the catalytic component B, while CHM (component A) mediates Rab protein binding. Can associate with the Rab GGTase dimer (RGGT or component B) prior to Rab protein binding; the association is stabilized by geranylgeranyl pyrophosphate (GGpp). The CHM:RGGT:Rab complex is destabilized by GGpp. Interacts with RAB1A, RAB1B, RAB5A, RAB7A and RAB27A and mediates their prenylation. Interacts with the non-phosphorylated forms of RAB3A, RAB3B, RAB3C, RAB3D, RAB5B, RAB5C, RAB8A, RAB8B, RAB10, RAB12, RAB35, and RAB43.

It is found in the cytoplasm. It localises to the cytosol. Its function is as follows. Substrate-binding subunit of the Rab geranylgeranyltransferase (GGTase) complex. Binds unprenylated Rab proteins and presents the substrate peptide to the catalytic component B composed of RABGGTA and RABGGTB, and remains bound to it after the geranylgeranyl transfer reaction. The component A is thought to be regenerated by transferring its prenylated Rab back to the donor membrane. Besides, a pre-formed complex consisting of CHM and the Rab GGTase dimer (RGGT or component B) can bind to and prenylate Rab proteins; this alternative pathway is proposed to be the predominant pathway for Rab protein geranylgeranylation. This Homo sapiens (Human) protein is Rab proteins geranylgeranyltransferase component A 1 (CHM).